A 203-amino-acid chain; its full sequence is Holliday junction branch migration complex subunit RuvA (203 aa).

The tract at residues 1-64 is domain I; sequence MIGRLRGIIL…EDAQLLYGFN (64 aa). Residues 65 to 142 are domain II; that stretch reads NKQERTLFKE…KGLHGDLFTP (78 aa). Positions 143-154 are flexible linker; it reads AVDLVLTSPASP. Positions 155–203 are domain III; that stretch reads TSEDAEQEAVAALVALGYKPQEASRMVNKIARPDASSETLIRDALRAAL.

This sequence belongs to the RuvA family. In terms of assembly, homotetramer. Forms an RuvA(8)-RuvB(12)-Holliday junction (HJ) complex. HJ DNA is sandwiched between 2 RuvA tetramers; dsDNA enters through RuvA and exits via RuvB. An RuvB hexamer assembles on each DNA strand where it exits the tetramer. Each RuvB hexamer is contacted by two RuvA subunits (via domain III) on 2 adjacent RuvB subunits; this complex drives branch migration. In the full resolvosome a probable DNA-RuvA(4)-RuvB(12)-RuvC(2) complex forms which resolves the HJ.

Its subcellular location is the cytoplasm. Its function is as follows. The RuvA-RuvB-RuvC complex processes Holliday junction (HJ) DNA during genetic recombination and DNA repair, while the RuvA-RuvB complex plays an important role in the rescue of blocked DNA replication forks via replication fork reversal (RFR). RuvA specifically binds to HJ cruciform DNA, conferring on it an open structure. The RuvB hexamer acts as an ATP-dependent pump, pulling dsDNA into and through the RuvAB complex. HJ branch migration allows RuvC to scan DNA until it finds its consensus sequence, where it cleaves and resolves the cruciform DNA. This chain is Holliday junction branch migration complex subunit RuvA, found in Salmonella choleraesuis (strain SC-B67).